Here is a 63-residue protein sequence, read N- to C-terminus: Large ribosomal subunit protein bL32 (63 aa).

Residues 1-27 are disordered; sequence MANPKAKMSKSRRDKRRAQFNARTKPA. Residues 7-18 are compositionally biased toward basic residues; it reads KMSKSRRDKRRA.

It belongs to the bacterial ribosomal protein bL32 family.

The chain is Large ribosomal subunit protein bL32 from Pelodictyon phaeoclathratiforme (strain DSM 5477 / BU-1).